The chain runs to 57 residues: Large ribosomal subunit protein eL20 (57 aa).

Residues 1–10 (MSEFTVTGTF) are compositionally biased toward polar residues. The segment at 1–21 (MSEFTVTGTFESRDGNQPFEK) is disordered.

It belongs to the eukaryotic ribosomal protein eL20 family. As to quaternary structure, part of the 50S ribosomal subunit. Binds 23S rRNA.

The chain is Large ribosomal subunit protein eL20 from Halomicrobium mukohataei (strain ATCC 700874 / DSM 12286 / JCM 9738 / NCIMB 13541) (Haloarcula mukohataei).